A 447-amino-acid chain; its full sequence is Tubulin beta chain (447 aa).

Residues Q11, E69, S138, G142, T143, G144, N204, and N226 each contribute to the GTP site. E69 contributes to the Mg(2+) binding site. Residues 424-447 (QYQDASISEGEEDYEEEPQVENEE) form a disordered region. Acidic residues predominate over residues 432–447 (EGEEDYEEEPQVENEE).

It belongs to the tubulin family. As to quaternary structure, dimer of alpha and beta chains. A typical microtubule is a hollow water-filled tube with an outer diameter of 25 nm and an inner diameter of 15 nM. Alpha-beta heterodimers associate head-to-tail to form protofilaments running lengthwise along the microtubule wall with the beta-tubulin subunit facing the microtubule plus end conferring a structural polarity. Microtubules usually have 13 protofilaments but different protofilament numbers can be found in some organisms and specialized cells. Mg(2+) is required as a cofactor.

The protein resides in the cytoplasm. Its subcellular location is the cytoskeleton. Its function is as follows. Tubulin is the major constituent of microtubules, a cylinder consisting of laterally associated linear protofilaments composed of alpha- and beta-tubulin heterodimers. Microtubules grow by the addition of GTP-tubulin dimers to the microtubule end, where a stabilizing cap forms. Below the cap, tubulin dimers are in GDP-bound state, owing to GTPase activity of alpha-tubulin. The chain is Tubulin beta chain from Uncinula necator (Grape powdery mildew).